A 140-amino-acid chain; its full sequence is Sec-independent protein translocase protein TatB (140 aa).

The helical transmembrane segment at 2 to 22 (LPGIGFSELLLIGLAALIIIG) threads the bilayer. Positions 90–140 (VNSAVMREHPVSPPPPATPPAPPAELPPEAAPHADSQNAPPEADPAKGDRT) are disordered. The span at 100 to 119 (VSPPPPATPPAPPAELPPEA) shows a compositional bias: pro residues.

The protein belongs to the TatB family. In terms of assembly, the Tat system comprises two distinct complexes: a TatABC complex, containing multiple copies of TatA, TatB and TatC subunits, and a separate TatA complex, containing only TatA subunits. Substrates initially bind to the TatABC complex, which probably triggers association of the separate TatA complex to form the active translocon.

It localises to the cell inner membrane. Its function is as follows. Part of the twin-arginine translocation (Tat) system that transports large folded proteins containing a characteristic twin-arginine motif in their signal peptide across membranes. Together with TatC, TatB is part of a receptor directly interacting with Tat signal peptides. TatB may form an oligomeric binding site that transiently accommodates folded Tat precursor proteins before their translocation. The polypeptide is Sec-independent protein translocase protein TatB (Hyphomonas neptunium (strain ATCC 15444)).